A 140-amino-acid polypeptide reads, in one-letter code: Ribosomal RNA large subunit methyltransferase H (140 aa).

Positions 55 and 87 each coordinate S-adenosyl-L-methionine.

Belongs to the RNA methyltransferase RlmH family. As to quaternary structure, homodimer.

Its subcellular location is the cytoplasm. The catalysed reaction is pseudouridine(1915) in 23S rRNA + S-adenosyl-L-methionine = N(3)-methylpseudouridine(1915) in 23S rRNA + S-adenosyl-L-homocysteine + H(+). In terms of biological role, specifically methylates the pseudouridine at position 1915 (m3Psi1915) in 23S rRNA. The chain is Ribosomal RNA large subunit methyltransferase H from Rhizorhabdus wittichii (strain DSM 6014 / CCUG 31198 / JCM 15750 / NBRC 105917 / EY 4224 / RW1) (Sphingomonas wittichii).